Consider the following 173-residue polypeptide: Alpha-crystallin A chain (173 aa).

An N-acetylmethionine modification is found at Met-1. Residues 1-63 are required for complex formation with BFSP1 and BFSP2; that stretch reads MDIAIQHPWF…RTVLDSGISE (63 aa). Gln-6 bears the Deamidated glutamine; partial mark. Ser-45 carries the post-translational modification Phosphoserine. Gln-50 is modified (deamidated glutamine; partial). In terms of domain architecture, sHSP spans 52–162; that stretch reads LFRTVLDSGI…GHSERAIPVS (111 aa). N6-acetyllysine is present on Lys-70. A Deamidated glutamine; partial modification is found at Gln-90. At Lys-99 the chain carries N6-acetyllysine. A Zn(2+)-binding site is contributed by His-100. Asn-101 carries the post-translational modification Deamidated asparagine; partial. Zn(2+) contacts are provided by Glu-102 and His-107. Ser-122 is modified (phosphoserine). Asn-123 is subject to Deamidated asparagine; partial. The tract at residues 144–173 is disordered; sequence PKVPSGMDAGHSERAIPVSREEKPSSAPSS. Positions 153–167 are enriched in basic and acidic residues; it reads GHSERAIPVSREEKP. Zn(2+) is bound at residue His-154. Ser-162 is a glycosylation site (O-linked (GlcNAc) serine).

Belongs to the small heat shock protein (HSP20) family. Heteromer composed of three CRYAA and one CRYAB subunits. Inter-subunit bridging via zinc ions enhances stability, which is crucial as there is no protein turn over in the lens. Can also form homodimers and homotetramers (dimers of dimers) which serve as the building blocks of homooligomers. Within homooligomers, the zinc-binding motif is created from residues of 3 different molecules. His-100 and Glu-102 from one molecule are ligands of the zinc ion, and His-107 and His-154 residues from additional molecules complete the site with tetrahedral coordination geometry. Part of a complex required for lens intermediate filament formation composed of BFSP1, BFSP2 and CRYAA. Acetylation at Lys-70 may increase chaperone activity. Post-translationally, undergoes age-dependent proteolytical cleavage at the C-terminus.

The protein resides in the cytoplasm. It is found in the nucleus. In terms of biological role, contributes to the transparency and refractive index of the lens. Acts as a chaperone, preventing aggregation of various proteins under a wide range of stress conditions. Required for the correct formation of lens intermediate filaments as part of a complex composed of BFSP1, BFSP2 and CRYAA. The chain is Alpha-crystallin A chain (CRYAA) from Balaenoptera acutorostrata (Common minke whale).